A 262-amino-acid chain; its full sequence is Putative ankyrin repeat protein FPV243 (262 aa).

The ANK repeat unit spans residues 25-54 (YGSTPLFEAICNCSCKNVKLFLENNADINE).

This is Putative ankyrin repeat protein FPV243 from Vertebrata (FPV).